We begin with the raw amino-acid sequence, 517 residues long: Cell division cycle protein 73 (517 aa).

The segment covering 124-135 has biased composition (basic and acidic residues); it reads SEPEAKKPRLDG. Disordered regions lie at residues 124–159 and 306–326; these read SEPE…SAAK and GHHA…LAKP. Over residues 315–324 the composition is skewed to pro residues; that stretch reads DAPPGRPPLA.

This sequence belongs to the CDC73 family. In terms of assembly, component of the PAF1 complex which consists of at least cdc-73, ctr-9, leo-1, pafo-1 and rtfo-1.

Its subcellular location is the nucleus. Component of the PAF1 complex which is a multifunctional complex involved in transcription initiation via genetic interactions with TATA-binding proteins, elongation and transcription-coupled histone modification. This Caenorhabditis elegans protein is Cell division cycle protein 73.